The sequence spans 259 residues: Small ribosomal subunit protein uS2 (259 aa).

It belongs to the universal ribosomal protein uS2 family.

The sequence is that of Small ribosomal subunit protein uS2 from Streptococcus pneumoniae serotype 2 (strain D39 / NCTC 7466).